The sequence spans 97 residues: Large ribosomal subunit protein eL21 (97 aa).

A compositionally biased stretch (basic residues) spans 1–24 (MVQKPHSFRRKTRKKLRKHPRRRG). The disordered stretch occupies residues 1-25 (MVQKPHSFRRKTRKKLRKHPRRRGL).

The protein belongs to the eukaryotic ribosomal protein eL21 family.

This chain is Large ribosomal subunit protein eL21 (rpl21e), found in Pyrococcus horikoshii (strain ATCC 700860 / DSM 12428 / JCM 9974 / NBRC 100139 / OT-3).